The sequence spans 587 residues: Aspartate--tRNA ligase (587 aa).

Residue Glu175 coordinates L-aspartate. The tract at residues 199 to 202 (QQFK) is aspartate. Residues Arg221 and His446 each coordinate L-aspartate. 221-223 (RDE) is an ATP binding site. Glu480 contacts ATP. Arg487 is an L-aspartate binding site. Residue 532 to 535 (GVDR) coordinates ATP.

The protein belongs to the class-II aminoacyl-tRNA synthetase family. Type 1 subfamily. In terms of assembly, homodimer.

Its subcellular location is the cytoplasm. It catalyses the reaction tRNA(Asp) + L-aspartate + ATP = L-aspartyl-tRNA(Asp) + AMP + diphosphate. In terms of biological role, catalyzes the attachment of L-aspartate to tRNA(Asp) in a two-step reaction: L-aspartate is first activated by ATP to form Asp-AMP and then transferred to the acceptor end of tRNA(Asp). The polypeptide is Aspartate--tRNA ligase (Streptomyces avermitilis (strain ATCC 31267 / DSM 46492 / JCM 5070 / NBRC 14893 / NCIMB 12804 / NRRL 8165 / MA-4680)).